A 200-amino-acid polypeptide reads, in one-letter code: Peptidyl-tRNA hydrolase (200 aa).

A tRNA-binding site is contributed by Tyr-15. The Proton acceptor role is filled by His-20. The tRNA site is built by Tyr-66, Asn-68, and Asn-114.

This sequence belongs to the PTH family. In terms of assembly, monomer.

Its subcellular location is the cytoplasm. The catalysed reaction is an N-acyl-L-alpha-aminoacyl-tRNA + H2O = an N-acyl-L-amino acid + a tRNA + H(+). Functionally, hydrolyzes ribosome-free peptidyl-tRNAs (with 1 or more amino acids incorporated), which drop off the ribosome during protein synthesis, or as a result of ribosome stalling. Its function is as follows. Catalyzes the release of premature peptidyl moieties from peptidyl-tRNA molecules trapped in stalled 50S ribosomal subunits, and thus maintains levels of free tRNAs and 50S ribosomes. In Paraburkholderia phymatum (strain DSM 17167 / CIP 108236 / LMG 21445 / STM815) (Burkholderia phymatum), this protein is Peptidyl-tRNA hydrolase.